The following is a 400-amino-acid chain: tRNA-specific 2-thiouridylase MnmA (400 aa).

ATP-binding positions include Ala19 to Ser26 and Leu45. Cys113 functions as the Nucleophile in the catalytic mechanism. An intrachain disulfide couples Cys113 to Cys210. Position 137 (Gly137) interacts with ATP. The interaction with tRNA stretch occupies residues Arg160 to Gln162. Cys210 functions as the Cysteine persulfide intermediate in the catalytic mechanism.

Belongs to the MnmA/TRMU family.

Its subcellular location is the cytoplasm. It catalyses the reaction S-sulfanyl-L-cysteinyl-[protein] + uridine(34) in tRNA + AH2 + ATP = 2-thiouridine(34) in tRNA + L-cysteinyl-[protein] + A + AMP + diphosphate + H(+). Functionally, catalyzes the 2-thiolation of uridine at the wobble position (U34) of tRNA, leading to the formation of s(2)U34. In Rhodopseudomonas palustris (strain BisB18), this protein is tRNA-specific 2-thiouridylase MnmA.